The following is a 300-amino-acid chain: Putative S-adenosyl-L-methionine-dependent methyltransferase Mkms_0379 (300 aa).

S-adenosyl-L-methionine is bound by residues aspartate 128 and 157–158 (DL).

This sequence belongs to the UPF0677 family.

Functionally, exhibits S-adenosyl-L-methionine-dependent methyltransferase activity. The polypeptide is Putative S-adenosyl-L-methionine-dependent methyltransferase Mkms_0379 (Mycobacterium sp. (strain KMS)).